Reading from the N-terminus, the 507-residue chain is Maturase K (507 aa).

Belongs to the intron maturase 2 family. MatK subfamily.

It is found in the plastid. Its subcellular location is the chloroplast. In terms of biological role, usually encoded in the trnK tRNA gene intron. Probably assists in splicing its own and other chloroplast group II introns. The sequence is that of Maturase K from Lyonia lucida (Fetterbush).